Consider the following 369-residue polypeptide: MLNFKHLMAAALLLSTSLGVQAERLKDIASISGVRSNQLIGYGLVVGLNGTGDQTTQTPFTLQTFNNMLSQFGIKVPAGSGNVQLKNVAAVSVSADLPAFAKPGQQVDITVSSIGNSKSLRGGTLLLTPLKGIDGNVYAIAQGNLVVGGFDAEGRDGSKITVNVPSAGRIPGGASVERAVPSGFNQGNSLTLNLNRSDFTTAKRIVDKINDMLGPGVAQAIDGGSIRVTAPLDPSQRVDYLSILENLEIDPGQAVAKVIINSRTGTIVIGQNVKVSPAAVTHGSLTVTITEDPIVSQPGPLSNGQTAVVPRSRVNAQQEAKPMFKFGPGTTLDEIVRAVNQVGAAPGDLMAILEALKQAGALQADLIVI.

The N-terminal stretch at 1-22 is a signal peptide; sequence MLNFKHLMAAALLLSTSLGVQA.

It belongs to the FlgI family. As to quaternary structure, the basal body constitutes a major portion of the flagellar organelle and consists of four rings (L,P,S, and M) mounted on a central rod.

The protein localises to the periplasm. It is found in the bacterial flagellum basal body. In terms of biological role, assembles around the rod to form the L-ring and probably protects the motor/basal body from shearing forces during rotation. The polypeptide is Flagellar P-ring protein (Pseudomonas fluorescens (strain ATCC BAA-477 / NRRL B-23932 / Pf-5)).